Consider the following 241-residue polypeptide: ATP-dependent Clp protease ATP-binding subunit CLPT2, chloroplastic (241 aa).

The transit peptide at 1 to 75 directs the protein to the chloroplast; that stretch reads MAAHSSCNFA…PRRIHKSAIS (75 aa). The region spanning 91–237 is the Clp R domain; the sequence is KPKWSWRAIK…ELESFASESG (147 aa). Repeat regions lie at residues 94-159 and 171-237; these read WSWR…LGKA and LTED…SESG.

The protein belongs to the ClpA/ClpB family. Monomer and homodimer. The dimers monomerize before association to the P-ring. Component of the chloroplastic Clp protease core complex which consist of at least 16 proteins: CLPP4 (3 copies), CLPP5 (3 copies), CLPR4 (2 copies), ClpP1 (1 copy), CLPP6 (1 copy), CLPR2 (1 copy), CLPT1 (1 copy), CLPT2 (1 copy) and 3 copies of CLPP3 and/or CLPR1 and/or CLPR3. Interacts with AHK2. Interacts with CPN21. No interactions with CLPS1.

Its subcellular location is the plastid. It localises to the chloroplast. Accessory protein regulating the assembly of the plastidial Clp protease system. CLPT1 first binds to the heptameric P-ring containing the CLP3-6 subunits followed by CLPT2, and only then does the P-ring combine with the R-ring composed of the clpP1 and CLPR1-4 subunits. Once the core complex is fully assembled, it then associates to the CLPC chaperone partner to form the functional protease. CLPT2 and CLPT1 are partially redundant. This chain is ATP-dependent Clp protease ATP-binding subunit CLPT2, chloroplastic, found in Arabidopsis thaliana (Mouse-ear cress).